A 320-amino-acid polypeptide reads, in one-letter code: 3-oxoacyl-[acyl-carrier-protein] reductase 1, chloroplastic (320 aa).

Residues 1 to 60 (MATTVAATKLTSLKAVKKLGFREIRQVRQWSPLQSAMPHFGMLRCGSRQSFATSTVVKAQ) constitute a chloroplast transit peptide. An NADP(+)-binding site is contributed by 82-106 (VTGASRGIGKAIALSLGKAGCKVLV). Position 214 (Ser-214) interacts with substrate. Tyr-227 acts as the Proton acceptor in catalysis.

This sequence belongs to the short-chain dehydrogenases/reductases (SDR) family. As to quaternary structure, homotetramer.

It is found in the plastid. It localises to the chloroplast. It catalyses the reaction a (3R)-hydroxyacyl-[ACP] + NADP(+) = a 3-oxoacyl-[ACP] + NADPH + H(+). The protein operates within lipid metabolism; fatty acid biosynthesis. The protein is 3-oxoacyl-[acyl-carrier-protein] reductase 1, chloroplastic (gbkr1) of Brassica napus (Rape).